The chain runs to 300 residues: MAKPLSISSQPSVNVAWRDYFEMTKPKVVALMLLTVLVGMCLAMPTILPVQPLIAGLLGIAMMAGSAAALNHLIDRRIDGLMARTYNRPLPKGRISATRALIFAAALGSLGFVILYVFTNPLTAWLTFASLIGYALIYTAYLKRATPQNIVIGGLAGAMPPLLGWTAVTNQFHGHALLLVIIIFLWTPPHFWALAIHRRAEYAKVDIPMLPVTHGVEFTKTCILLYTILLAIACLLPVLVGMSGPLYFVCSSALSCGFIYKAWQLKYQDHEGLAMQVFRFSIYHLMLLFMALLLDHYLWA.

Transmembrane regions (helical) follow at residues 28–48 (VVALMLLTVLVGMCLAMPTIL), 50–70 (VQPLIAGLLGIAMMAGSAAAL), 100–120 (ALIFAAALGSLGFVILYVFTN), 122–142 (LTAWLTFASLIGYALIYTAYL), 149–169 (NIVIGGLAGAMPPLLGWTAVT), 176–196 (ALLLVIIIFLWTPPHFWALAI), 222–242 (CILLYTILLAIACLLPVLVGM), 243–263 (SGPLYFVCSSALSCGFIYKAW), and 280–300 (FSIYHLMLLFMALLLDHYLWA).

It belongs to the UbiA prenyltransferase family. Protoheme IX farnesyltransferase subfamily.

It is found in the cell inner membrane. The enzyme catalyses heme b + (2E,6E)-farnesyl diphosphate + H2O = Fe(II)-heme o + diphosphate. It participates in porphyrin-containing compound metabolism; heme O biosynthesis; heme O from protoheme: step 1/1. Converts heme B (protoheme IX) to heme O by substitution of the vinyl group on carbon 2 of heme B porphyrin ring with a hydroxyethyl farnesyl side group. The chain is Protoheme IX farnesyltransferase from Shewanella oneidensis (strain ATCC 700550 / JCM 31522 / CIP 106686 / LMG 19005 / NCIMB 14063 / MR-1).